A 283-amino-acid polypeptide reads, in one-letter code: Bifunctional protein FolD (283 aa).

Residues 164-166 (GRS), Ser-189, and Thr-230 contribute to the NADP(+) site.

The protein belongs to the tetrahydrofolate dehydrogenase/cyclohydrolase family. In terms of assembly, homodimer.

The catalysed reaction is (6R)-5,10-methylene-5,6,7,8-tetrahydrofolate + NADP(+) = (6R)-5,10-methenyltetrahydrofolate + NADPH. The enzyme catalyses (6R)-5,10-methenyltetrahydrofolate + H2O = (6R)-10-formyltetrahydrofolate + H(+). It participates in one-carbon metabolism; tetrahydrofolate interconversion. Functionally, catalyzes the oxidation of 5,10-methylenetetrahydrofolate to 5,10-methenyltetrahydrofolate and then the hydrolysis of 5,10-methenyltetrahydrofolate to 10-formyltetrahydrofolate. The protein is Bifunctional protein FolD of Dictyoglomus thermophilum (strain ATCC 35947 / DSM 3960 / H-6-12).